Consider the following 417-residue polypeptide: D-amino acid dehydrogenase (417 aa).

3 to 17 (VVILGSGVVGVSTAW) serves as a coordination point for FAD.

This sequence belongs to the DadA oxidoreductase family. It depends on FAD as a cofactor.

The catalysed reaction is a D-alpha-amino acid + A + H2O = a 2-oxocarboxylate + AH2 + NH4(+). It participates in amino-acid degradation; D-alanine degradation; NH(3) and pyruvate from D-alanine: step 1/1. Oxidative deamination of D-amino acids. The sequence is that of D-amino acid dehydrogenase from Pectobacterium atrosepticum (strain SCRI 1043 / ATCC BAA-672) (Erwinia carotovora subsp. atroseptica).